Consider the following 745-residue polypeptide: Ankyrin repeat and protein kinase domain-containing protein 1 (745 aa).

The region spanning 34-301 (EEEWHLVASG…NVAVETDMLL (268 aa)) is the Protein kinase domain. ATP-binding positions include 40–48 (VASGGFSKV) and K63. D157 acts as the Proton acceptor in catalysis. ANK repeat units lie at residues 369–398 (NRVT…DVDC), 402–431 (SGYT…DTNL), 435–464 (DGWA…LVNA), 468–497 (EGWT…DLSP), 501–530 (EGKT…ELDA), 534–563 (NLRT…LPDA), 567–596 (SGYS…SLEL), 600–629 (QGWT…DLDA), 633–662 (MQWT…NPNA), 666–695 (SGWT…DIHA), and 699–728 (VGWT…QVDV).

It belongs to the protein kinase superfamily. TKL Ser/Thr protein kinase family.

The catalysed reaction is L-seryl-[protein] + ATP = O-phospho-L-seryl-[protein] + ADP + H(+). It carries out the reaction L-threonyl-[protein] + ATP = O-phospho-L-threonyl-[protein] + ADP + H(+). The sequence is that of Ankyrin repeat and protein kinase domain-containing protein 1 (Ankk1) from Mus musculus (Mouse).